The sequence spans 470 residues: uncharacterized protein (470 aa).

A coiled-coil region spans residues 418–453; it reads SECCEEQEEKEKKKEKEKEKKKEKDDDDDQQNNNNN. The interval 423-470 is disordered; the sequence is EQEEKEKKKEKEKEKKKEKDDDDDQQNNNNNDQNGLGLGLGLNFGLNL. A compositionally biased stretch (basic and acidic residues) spans 426–441; that stretch reads EKEKKKEKEKEKKKEK. Positions 448–457 are enriched in low complexity; that stretch reads QNNNNNDQNG.

This is an uncharacterized protein from Acidianus bottle-shaped virus (isolate Italy/Pozzuoli) (ABV).